A 71-amino-acid chain; its full sequence is ATP synthase subunit c (71 aa).

2 helical membrane passes run 9 to 29 and 49 to 69; these read MIGY…IFAA and LLGF…AFVI.

The protein belongs to the ATPase C chain family. F-type ATPases have 2 components, F(1) - the catalytic core - and F(0) - the membrane proton channel. F(1) has five subunits: alpha(3), beta(3), gamma(1), delta(1), epsilon(1). F(0) has three main subunits: a(1), b(2) and c(10-14). The alpha and beta chains form an alternating ring which encloses part of the gamma chain. F(1) is attached to F(0) by a central stalk formed by the gamma and epsilon chains, while a peripheral stalk is formed by the delta and b chains.

Its subcellular location is the cell membrane. F(1)F(0) ATP synthase produces ATP from ADP in the presence of a proton or sodium gradient. F-type ATPases consist of two structural domains, F(1) containing the extramembraneous catalytic core and F(0) containing the membrane proton channel, linked together by a central stalk and a peripheral stalk. During catalysis, ATP synthesis in the catalytic domain of F(1) is coupled via a rotary mechanism of the central stalk subunits to proton translocation. Functionally, key component of the F(0) channel; it plays a direct role in translocation across the membrane. A homomeric c-ring of between 10-14 subunits forms the central stalk rotor element with the F(1) delta and epsilon subunits. The chain is ATP synthase subunit c from Micrococcus luteus (strain ATCC 4698 / DSM 20030 / JCM 1464 / CCM 169 / CCUG 5858 / IAM 1056 / NBRC 3333 / NCIMB 9278 / NCTC 2665 / VKM Ac-2230) (Micrococcus lysodeikticus).